A 173-amino-acid chain; its full sequence is Sterile alpha motif domain-containing protein 5 (173 aa).

The 65-residue stretch at 1-65 (MCTNIVYEWL…LEAVRRLREQ (65 aa)) folds into the SAM domain. Positions 75 to 119 (TLEPQPAPPGPPADAVPTGRRGEPCGGPAQGTRGDSRGHTTAPRS) are disordered. Residues 79-88 (QPAPPGPPAD) show a composition bias toward pro residues.

In terms of assembly, interacts promiscuously (via SAM domain) with EPHA5, EPHA6, EPHA7, EPHA8, EPHB1, EPHB2, EPHB3 and EPHB4 (via SAM domain) (in vitro). In terms of tissue distribution, detected in biliary epithelial cells on bile ducts at the hepatic hilum (at protein level).

It localises to the cytoplasm. The polypeptide is Sterile alpha motif domain-containing protein 5 (SAMD5) (Homo sapiens (Human)).